A 357-amino-acid polypeptide reads, in one-letter code: COP9 signalosome complex subunit 5a (357 aa).

M1 is modified (N-acetylmethionine). Positions 59–196 (VHISALALLK…IGAFRTYPEG (138 aa)) constitute an MPN domain. Residues H142, H144, and D155 each contribute to the Zn(2+) site. Positions 142–155 (HSHPGYGCWLSGID) match the JAMM motif motif. Positions 338 to 357 (ARQSKKSADDSSDPEPMITS) are disordered.

It belongs to the peptidase M67A family. CSN5 subfamily. In terms of assembly, component of the CSN complex, probably composed of CSN1, CSN2, CSN3, CSN4, CSN5 (CSN5A or CSN5B), CSN6 (CSN6A or CSN6B), CSN7 and CSN8. CSN5A or CSN5B are present within distinct CSN complexes each containing only one copy of CSN5. Interacts with itself. In the complex, it is located in the center and probably interacts directly with CSN4 and CSN6A or CSN6B. Present also in subcomplex forms which inculdes CSN3. Also exists as monomeric form. Interacts with CYT1 in vitro, but not in planta. A divalent metal cation is required as a cofactor. As to expression, ubiquitously expressed. Highly expressed in flowers and roots. Expressed at lower level in seedlings and siliques.

The protein localises to the cytoplasm. The protein resides in the nucleus. In terms of biological role, probable protease subunit of the COP9 signalosome complex (CSN), a complex involved in various cellular and developmental processes such as photomorphogenesis and auxin and jasmonate responses. The CSN complex is an essential regulator of the ubiquitin (Ubl) conjugation pathway by mediating the deneddylation of the cullin subunits of the SCF-type E3 ligase complexes, leading to decrease the Ubl ligase activity of SCF. In the complex, it probably acts as the catalytic center that mediates the cleavage of Nedd8 from cullins. It however has no metalloprotease activity by itself and requires the other subunits of the CSN complex. The CSN complex is involved in repression of photomorphogenesis in darkness by regulating the activity of COP1-containing Ubl ligase complexes. The complex is also required for degradation of PSIAA6 by regulating the activity of the Ubl ligase SCF-TIR complex. Involved in CSN's deneddylation/derubylation activity. Required for the deneddylation of all cullins. Essential for the structural integrity of the CSN holocomplex. The sequence is that of COP9 signalosome complex subunit 5a from Arabidopsis thaliana (Mouse-ear cress).